We begin with the raw amino-acid sequence, 820 residues long: Phenylalanine--tRNA ligase beta subunit (820 aa).

A tRNA-binding domain is found at 42 to 154 (KGGLEGLVIG…AEAVPGTLAK (113 aa)). In terms of domain architecture, B5 spans 413–489 (PQDFMVELSY…RIYGYNNVEI (77 aa)). The Mg(2+) site is built by Asp467, Asp473, Glu476, and Asp477. Residues 727 to 820 (SKFPAVKRDL…LEDKLNAKLR (94 aa)) enclose the FDX-ACB domain.

This sequence belongs to the phenylalanyl-tRNA synthetase beta subunit family. Type 1 subfamily. As to quaternary structure, tetramer of two alpha and two beta subunits. The cofactor is Mg(2+).

The protein localises to the cytoplasm. It carries out the reaction tRNA(Phe) + L-phenylalanine + ATP = L-phenylalanyl-tRNA(Phe) + AMP + diphosphate + H(+). The polypeptide is Phenylalanine--tRNA ligase beta subunit (Bacteroides thetaiotaomicron (strain ATCC 29148 / DSM 2079 / JCM 5827 / CCUG 10774 / NCTC 10582 / VPI-5482 / E50)).